A 150-amino-acid chain; its full sequence is Large ribosomal subunit protein bL9 (150 aa).

Belongs to the bacterial ribosomal protein bL9 family.

In terms of biological role, binds to the 23S rRNA. The chain is Large ribosomal subunit protein bL9 from Desulforudis audaxviator (strain MP104C).